Reading from the N-terminus, the 474-residue chain is Vacuolar basic amino acid transporter 2 (474 aa).

The Cytoplasmic segment spans residues 1–33 (MSISNWITTAYLITSTSFQPLYGSFSDALGRRN). Residues 34-54 (CLFFANGAFTIGCLACGFSKN) form a helical membrane-spanning segment. Topologically, residues 55–62 (IYMLSFMR) are vacuolar. A helical membrane pass occupies residues 63 to 85 (ALTGIGGGGLITLSTIVNSDVIP). Residues 86–97 (SSKRGIFQAFQN) lie on the Cytoplasmic side of the membrane. The helical transmembrane segment at 98–118 (LLLGFGAICGASFGGTIASSI) threads the bilayer. Topologically, residues 119–121 (GWR) are vacuolar. Residues 122-142 (WCFLIQVPISVISSILMNYYV) form a helical membrane-spanning segment. Residues 143–167 (PNQKEYNRQNSSIFQNPGKILRDID) lie on the Cytoplasmic side of the membrane. Residues 168–188 (VMGSILIITGLTLQLLYLSLG) traverse the membrane as a helical segment. The Vacuolar segment spans residues 189–196 (CSTSKLSW). Residues 197–217 (TSPSVLLLLVGSVIILLLFIL) form a helical membrane-spanning segment. The Cytoplasmic segment spans residues 218–238 (HERKTSARAIIPMELVNSSYS). A helical transmembrane segment spans residues 239 to 259 (VVVLSISILVGFASYAYLFTL). Residues 260 to 273 (PLFFQIVLGDSTAK) lie on the Vacuolar side of the membrane. Residues 274-294 (AGLRLTIPSLFTPVGSLITGF) traverse the membrane as a helical segment. The Cytoplasmic portion of the chain corresponds to 295-303 (SMSKYNCLR). The chain crosses the membrane as a helical span at residues 304–324 (LLLYIGISLMFLGNFLFLFIE). At 325–331 (KTSPNWL) the chain is on the vacuolar side. Residues 332–352 (IGLFLIPANLGQGITFPTTLF) traverse the membrane as a helical segment. Residues 353-375 (TFIFMFSKSDQATATSTLYLFRS) are Cytoplasmic-facing. The chain crosses the membrane as a helical span at residues 376–396 (IGSVWGVAISAGVIQLSFAGL). The Vacuolar segment spans residues 397-447 (LRSNLKGLLDENKIKKLIVQLSANSSYIGSLHGEVKNTVIKSFDEATKRAH). N-linked (GlcNAc...) asparagine glycosylation occurs at N420. Residues 448–468 (LMSTLLSSLALILCILKDNLA) form a helical membrane-spanning segment. Topologically, residues 469-474 (KPKTRR) are cytoplasmic.

This sequence belongs to the major facilitator superfamily.

Its subcellular location is the vacuole membrane. Its function is as follows. Transporter required for vacuolar uptake of histidine, arginine and lysine and to a lesser extent tyrosine. In Saccharomyces cerevisiae (strain ATCC 204508 / S288c) (Baker's yeast), this protein is Vacuolar basic amino acid transporter 2 (VBA2).